The primary structure comprises 1025 residues: Complement receptor type 2 (1025 aa).

Residues 1–11 (MLTWFLFYFSE) form the signal peptide. The region spanning 12 to 75 (ISCDPPPEVK…WDKAPPICES (64 aa)) is the Sushi 1 domain. At 12 to 963 (ISCDPPPEVK…PLALCKYRRW (952 aa)) the chain is on the extracellular side. 2 cysteine pairs are disulfide-bonded: Cys-14/Cys-56 and Cys-42/Cys-73. Residues Asn-77 and Asn-113 are each glycosylated (N-linked (GlcNAc...) asparagine). Sushi domains are found at residues 80–140 (ISCS…VCES), 144–204 (LECP…TCKE), 205–265 (AQCE…VCKE), 266–336 (ILCP…YCVL), 341–400 (VLCL…VCEK), 401–460 (GCQA…QCTV), 461–516 (AECK…LCKE), 517–587 (ITCP…LCKL), 592–651 (VQCT…LCKK), 652–706 (EGCE…VCTV), 707–771 (ILCQ…QCLQ), 776–835 (THCP…TCIR), 839–899 (LGCQ…FCKE), and 900–960 (VNCS…LCKY). Disulfide bonds link Cys-82–Cys-124, Cys-110–Cys-138, Cys-146–Cys-189, Cys-175–Cys-202, Cys-207–Cys-248, Cys-234–Cys-263, Cys-268–Cys-317, Cys-297–Cys-334, Cys-343–Cys-385, Cys-371–Cys-398, Cys-402–Cys-445, Cys-431–Cys-458, Cys-463–Cys-501, Cys-487–Cys-514, Cys-519–Cys-568, Cys-548–Cys-585, Cys-594–Cys-636, Cys-622–Cys-649, Cys-654–Cys-689, Cys-675–Cys-704, Cys-709–Cys-752, Cys-738–Cys-769, Cys-778–Cys-820, Cys-806–Cys-833, Cys-841–Cys-884, and Cys-870–Cys-897. Asn-276, Asn-316, Asn-364, and Asn-380 each carry an N-linked (GlcNAc...) asparagine glycan. An N-linked (GlcNAc...) asparagine glycan is attached at Asn-484. Asn-527 carries N-linked (GlcNAc...) asparagine glycosylation. Residues Asn-615 and Asn-639 are each glycosylated (N-linked (GlcNAc...) asparagine). Residue Asn-694 is glycosylated (N-linked (GlcNAc...) asparagine). N-linked (GlcNAc...) asparagine glycans are attached at residues Asn-754, Asn-790, Asn-813, Asn-823, and Asn-851. Asn-901 carries N-linked (GlcNAc...) asparagine glycosylation. Disulfide bonds link Cys-902-Cys-945 and Cys-931-Cys-958. The helical transmembrane segment at 964–990 (STIPLICGISVGSALIILMSVGFCMIL) threads the bilayer. At 991-1025 (KHRESNYYTKTRPKEGALHLETREVYSIDPYNPAS) the chain is on the cytoplasmic side.

This sequence belongs to the receptors of complement activation (RCA) family. In terms of assembly, interacts (via Sushi domain 1 and 2) with C3. Interacts with CD19. Part of a complex composed of CD19, CR2/CD21, CD81 and IFITM1/CD225 in the membrane of mature B-cells. Interacts (via Sushi domain 1 and 2) with FCER2 (via the C-terminus). Interacts with CD23. Interacts with FCRL5. Interacts with CR1. Interacts with INFNA1. In terms of tissue distribution, B-lymphocytes.

It is found in the cell membrane. Serves as a receptor for various ligands including complement component CD3d, HNRNPU OR IFNA1. When C3d is bound to antigens, attaches to C3d on B-cell surface and thereby facilitates the recognition and uptake of antigens by B-cells. This interaction enhances B-cell activation and subsequent immune responses. Forms a complex with several partners on the surface of B-cells including CD19, FCRL5 and CD81, to form the B-cell coreceptor complex that plays a crucial role in B-cell activation and signaling. Also induces specific intracellular signaling separately from the BCR and CD19 by activating the tyrosine kinase SRC, which then phosphorylates nucleolin/NCL and triggers AKT and GSK3 kinase activities in a SYK/CD19-independent manner. Acts as a ligand for CD23 (FcepsilonRII), a low-affinity receptor for IgE, which is expressed on B-cells and other immune cells, and thus participates in the regulation of IgE production. The sequence is that of Complement receptor type 2 (Cr2) from Mus musculus (Mouse).